A 401-amino-acid chain; its full sequence is 1-deoxy-D-xylulose 5-phosphate reductoisomerase (401 aa).

The NADPH site is built by threonine 10, glycine 11, serine 12, isoleucine 13, asparagine 38, and asparagine 124. Lysine 125 is a 1-deoxy-D-xylulose 5-phosphate binding site. Glutamate 126 serves as a coordination point for NADPH. A Mn(2+)-binding site is contributed by aspartate 150. Residues serine 151, glutamate 152, serine 186, and histidine 209 each coordinate 1-deoxy-D-xylulose 5-phosphate. Glutamate 152 serves as a coordination point for Mn(2+). An NADPH-binding site is contributed by glycine 215. Residues serine 222, asparagine 227, lysine 228, and glutamate 231 each contribute to the 1-deoxy-D-xylulose 5-phosphate site. Position 231 (glutamate 231) interacts with Mn(2+).

This sequence belongs to the DXR family. The cofactor is Mg(2+). Mn(2+) is required as a cofactor.

It catalyses the reaction 2-C-methyl-D-erythritol 4-phosphate + NADP(+) = 1-deoxy-D-xylulose 5-phosphate + NADPH + H(+). Its pathway is isoprenoid biosynthesis; isopentenyl diphosphate biosynthesis via DXP pathway; isopentenyl diphosphate from 1-deoxy-D-xylulose 5-phosphate: step 1/6. In terms of biological role, catalyzes the NADPH-dependent rearrangement and reduction of 1-deoxy-D-xylulose-5-phosphate (DXP) to 2-C-methyl-D-erythritol 4-phosphate (MEP). In Vibrio campbellii (strain ATCC BAA-1116), this protein is 1-deoxy-D-xylulose 5-phosphate reductoisomerase.